A 354-amino-acid polypeptide reads, in one-letter code: Putative succinyl-diaminopimelate desuccinylase DapE (354 aa).

H69 contributes to the Zn(2+) binding site. Residue D71 is part of the active site. D95 contributes to the Zn(2+) binding site. The active-site Proton acceptor is the E125. Residues E126, E154, and H330 each contribute to the Zn(2+) site.

Belongs to the peptidase M20A family. As to quaternary structure, homodimer. Requires Zn(2+) as cofactor. It depends on Co(2+) as a cofactor.

It carries out the reaction N-succinyl-(2S,6S)-2,6-diaminopimelate + H2O = (2S,6S)-2,6-diaminopimelate + succinate. Its pathway is amino-acid biosynthesis; L-lysine biosynthesis via DAP pathway; LL-2,6-diaminopimelate from (S)-tetrahydrodipicolinate (succinylase route): step 3/3. Functionally, catalyzes the hydrolysis of N-succinyl-L,L-diaminopimelic acid (SDAP), forming succinate and LL-2,6-diaminoheptanedioate (DAP), an intermediate involved in the bacterial biosynthesis of lysine and meso-diaminopimelic acid. The sequence is that of Putative succinyl-diaminopimelate desuccinylase DapE (dapE) from Mycobacterium tuberculosis (strain CDC 1551 / Oshkosh).